The primary structure comprises 230 residues: Claudin-2 (230 aa).

The Cytoplasmic portion of the chain corresponds to 1–7; that stretch reads MASLGLQ. The chain crosses the membrane as a helical span at residues 8–28; that stretch reads LVGYILGLLGLLGTLVAMLLP. The Extracellular portion of the chain corresponds to 29–81; it reads SWRTSSYVGTSIVTAVGFSKGLWMECATHSTGITQCDIYSTLLGLPADIQAAQ. A disulfide bond links Cys-54 and Cys-64. The chain crosses the membrane as a helical span at residues 82–102; it reads AMMVTSSAISSLACIVSVVGM. Over 103 to 116 the chain is Cytoplasmic; it reads RCTVFCQDSRAKDR. The chain crosses the membrane as a helical span at residues 117 to 137; sequence LAVVGGVFFIIGGLLGFIPVA. Residues 138–162 lie on the Extracellular side of the membrane; the sequence is WNLHGILRDFYSPLVPDSMKFEIGE. A helical transmembrane segment spans residues 163–183; it reads ALYLGIISSLFSLVAGIILCF. Residues 184 to 230 lie on the Cytoplasmic side of the membrane; it reads SCPLQGNRSDYYDSYQAQPLATRGSPRPGQPPKAKSEFNSYSLTGYV. The tract at residues 205-230 is disordered; it reads TRGSPRPGQPPKAKSEFNSYSLTGYV. Lys-218 participates in a covalent cross-link: Glycyl lysine isopeptide (Lys-Gly) (interchain with G-Cter in SUMO). Phosphoserine is present on residues Ser-219 and Ser-223. A compositionally biased stretch (polar residues) spans 220–230; it reads EFNSYSLTGYV. An interaction with TJP1, TJP2 and TJP3 region spans residues 229-230; that stretch reads YV.

The protein belongs to the claudin family. Can form homo- and heteropolymers with other claudins to mediate paracellular barrier and channel functions of tight junctions in response to physiological stimuli. Homopolymers interact with CLDN3, but not CLDN1, homopolymers. Directly interacts with TJP1/ZO-1, TJP2/ZO-2 and TJP3/ZO-3. In terms of processing, the disulfide bond is necessary for pore formation, but is not required for correct protein trafficking.

It localises to the cell junction. Its subcellular location is the tight junction. The protein resides in the cell membrane. It carries out the reaction Na(+)(in) = Na(+)(out). The enzyme catalyses K(+)(in) = K(+)(out). It catalyses the reaction Rb(+)(in) = Rb(+)(out). The catalysed reaction is Li(+)(in) = Li(+)(out). It carries out the reaction Cs(+)(in) = Cs(+)(out). The enzyme catalyses Ca(2+)(in) = Ca(2+)(out). It catalyses the reaction methylamine(out) = methylamine(in). The catalysed reaction is choline(out) = choline(in). It carries out the reaction H2O(in) = H2O(out). Functionally, forms paracellular channels: polymerizes in tight junction strands with cation- and water-selective channels through the strands, conveying epithelial permeability in a process known as paracellular tight junction permeability. In intestinal epithelium, allows for sodium and water fluxes from the peritoneal side to the lumen of the intestine to regulate nutrient absorption and clear enteric pathogens as part of mucosal immune response. In kidney, allows passive sodium and calcium reabsorption across proximal tubules from the lumen back to the bloodstream. In the hepatobiliary tract, allows paracellular water and cation fluxes in the hepatic perivenous areas and biliary epithelium to generate bile flow and maintain osmotic gradients. The protein is Claudin-2 (CLDN2) of Canis lupus familiaris (Dog).